Reading from the N-terminus, the 755-residue chain is Zinc transporter ZIP6 (755 aa).

Residues 1-28 form the signal peptide; it reads MARKLSVILILTFALSVTNPLHELKAAA. Topologically, residues 29–325 are extracellular; that stretch reads FPQTTEKISP…PKTYSLQIAW (297 aa). N-linked (GlcNAc...) asparagine glycosylation is present at Asn-67. A compositionally biased stretch (basic and acidic residues) spans 95–128; that stretch reads DHDHHSDHEHHSDHERHSDHEHHSEHEHHSDHDH. Disordered regions lie at residues 95 to 186 and 202 to 246; these read DHDH…SASE and LETI…SVSE. A compositionally biased stretch (basic residues) spans 129–144; that stretch reads HSHHNHAASGKNKRKA. Basic and acidic residues-rich tracts occupy residues 145 to 159 and 167 to 179; these read LCPD…KDPR and HRPE…RNVK. Residues 219-234 are compositionally biased toward low complexity; the sequence is SSSTPPSVTSKSRVSR. 3 N-linked (GlcNAc...) asparagine glycosylation sites follow: Asn-241, Asn-266, and Asn-283. A helical transmembrane segment spans residues 326 to 346; sequence VGGFIAISIISFLSLLGVILV. The Cytoplasmic portion of the chain corresponds to 347–355; it reads PLMNRVFFK. The chain crosses the membrane as a helical span at residues 356–376; the sequence is FLLSFLVALAVGTLSGDAFLH. The Extracellular portion of the chain corresponds to 377–423; that stretch reads LLPHSHASHHHSHSHEEPAMEMKRGPLFSHLSSQNIEESAYFDSTWK. Residues 424 to 444 traverse the membrane as a helical segment; it reads GLTALGGLYFMFLVEHVLTLI. Residues 445 to 657 are Cytoplasmic-facing; sequence KQFKDKKKKN…LKAGMTVKQA (213 aa). Residues 464-480 are a coiled coil; it reads VEIKKQLSKYESQLSTN. 2 positions are modified to phosphoserine: Ser-471 and Ser-478. The helical transmembrane segment at 658-678 threads the bilayer; it reads VLYNALSAMLAYLGMATGIFI. The Extracellular segment spans residues 679 to 686; the sequence is GHYAENVS. N-linked (GlcNAc...) asparagine glycosylation is present at Asn-684. Residues 687-707 form a helical membrane-spanning segment; sequence MWIFALTAGLFMYVALVDMVP. Topologically, residues 708–724 are cytoplasmic; it reads EMLHNDASDHGCSRWGY. A helical transmembrane segment spans residues 725–745; the sequence is FFLQNAGMLLGFGIMLLISIF. The Extracellular portion of the chain corresponds to 746–755; it reads EHKIVFRINF.

Belongs to the ZIP transporter (TC 2.A.5) family. As to quaternary structure, interacts with SLC39A10; which triggers cells to undergo EMT and mitosis. Found in a complex with SLC39A6, SLC39A10 and with the 'Ser-727' phosphorylated form of STAT3 throughout mitosis. Found in a complex with SLC39A6, SLC39A10 and with NCAM1; this complex controls NCAM1 phosphorylation and integration into focal adhesion complexes during epithelial-to-mesenchymal transition (EMT). Found in a complex with SLC39A6, SLC39A10 and with GSK3B that controls NCAM1 phosphorylation. Post-translationally, cleaved on the N-terminus before locating to the plasma membrane. N-glycosylated. In terms of processing, phosphorylated by ZAP70 in response to TCR stimulation leading to its activation. Highly expressed in the breast, prostate, placenta, kidney, pituitary and corpus callosum. Weakly expressed in heart and intestine. Also highly expressed in cells derived from an adenocarcinoma of the cervix and lung carcinoma.

It is found in the cell membrane. It localises to the cell projection. The protein localises to the lamellipodium membrane. Its subcellular location is the membrane raft. The protein resides in the apical cell membrane. It carries out the reaction Zn(2+)(in) = Zn(2+)(out). Its function is as follows. Zinc-influx transporter which plays a role in zinc homeostasis and in the induction of epithelial-to-mesenchymal transition (EMT). When associated with SLC39A10, the heterodimer formed by SLC39A10 and SLC39A6 mediates cellular zinc uptake to trigger cells to undergo epithelial- to-mesenchymal transition (EMT). The SLC39A10-SLC39A6 heterodimer also controls NCAM1 phosphorylation and its integration into focal adhesion complexes during EMT. Zinc influx inactivates GSK3B, enabling unphosphorylated SNAI1 in the nucleus to down-regulate adherence genes such as CDH1, causing loss of cell adherence. In addition, the SLC39A10-SLC39A6 heterodimer plays an essentiel role in initiating mitosis by importing zinc into cells to initiate a pathway resulting in the onset of mitosis. Participates in the T-cell receptor signaling regulation by mediating cellular zinc uptake into activated lymphocytes. Regulates the zinc influx necessary for proper meiotic progression to metaphase II (MII) that allows the oocyte-to-egg transition. The polypeptide is Zinc transporter ZIP6 (Homo sapiens (Human)).